The chain runs to 391 residues: Toluene efflux pump periplasmic linker protein TtgG (391 aa).

Residues 1–32 form the signal peptide; that stretch reads MRAERWSQTVRQIRSPRALRVIPLTALMLISG. The N-palmitoyl cysteine moiety is linked to residue cysteine 33. Cysteine 33 carries the S-diacylglycerol cysteine lipid modification. The stretch at 107–136 forms a coiled coil; the sequence is RTYEAQLRRAEANRTSAQNLARRYETLLKT.

The protein belongs to the membrane fusion protein (MFP) (TC 8.A.1) family.

Its subcellular location is the cell inner membrane. In terms of biological role, the periplasmic linker component of an organic solvent efflux pump. Involved in export of a number of organic solvents, including toluene and styrene. This is the most important solvent efflux pump in this strain, although it can export AMP and some antibiotics. This Pseudomonas putida (strain DOT-T1E) protein is Toluene efflux pump periplasmic linker protein TtgG (ttgG).